We begin with the raw amino-acid sequence, 304 residues long: CRISPR-associated endonuclease Cas1 (304 aa).

Mn(2+)-binding residues include E148, H204, and E219.

The protein belongs to the CRISPR-associated endonuclease Cas1 family. Homodimer, forms a heterotetramer with a Cas2 homodimer. Mg(2+) is required as a cofactor. Mn(2+) serves as cofactor.

Functionally, CRISPR (clustered regularly interspaced short palindromic repeat), is an adaptive immune system that provides protection against mobile genetic elements (viruses, transposable elements and conjugative plasmids). CRISPR clusters contain spacers, sequences complementary to antecedent mobile elements, and target invading nucleic acids. CRISPR clusters are transcribed and processed into CRISPR RNA (crRNA). Acts as a dsDNA endonuclease. Involved in the integration of spacer DNA into the CRISPR cassette. In Neisseria meningitidis serogroup C (strain 8013), this protein is CRISPR-associated endonuclease Cas1.